Here is a 152-residue protein sequence, read N- to C-terminus: SsrA-binding protein (152 aa).

Residues 130–152 form a disordered region; that stretch reads HDKRQDLKQRQDKREMERAMKQR. Over residues 132 to 152 the composition is skewed to basic and acidic residues; the sequence is KRQDLKQRQDKREMERAMKQR.

This sequence belongs to the SmpB family.

It localises to the cytoplasm. In terms of biological role, required for rescue of stalled ribosomes mediated by trans-translation. Binds to transfer-messenger RNA (tmRNA), required for stable association of tmRNA with ribosomes. tmRNA and SmpB together mimic tRNA shape, replacing the anticodon stem-loop with SmpB. tmRNA is encoded by the ssrA gene; the 2 termini fold to resemble tRNA(Ala) and it encodes a 'tag peptide', a short internal open reading frame. During trans-translation Ala-aminoacylated tmRNA acts like a tRNA, entering the A-site of stalled ribosomes, displacing the stalled mRNA. The ribosome then switches to translate the ORF on the tmRNA; the nascent peptide is terminated with the 'tag peptide' encoded by the tmRNA and targeted for degradation. The ribosome is freed to recommence translation, which seems to be the essential function of trans-translation. This is SsrA-binding protein from Thermosynechococcus vestitus (strain NIES-2133 / IAM M-273 / BP-1).